The sequence spans 184 residues: Ribosome-recycling factor (184 aa).

This sequence belongs to the RRF family.

Its subcellular location is the cytoplasm. Responsible for the release of ribosomes from messenger RNA at the termination of protein biosynthesis. May increase the efficiency of translation by recycling ribosomes from one round of translation to another. The sequence is that of Ribosome-recycling factor from Bifidobacterium adolescentis (strain ATCC 15703 / DSM 20083 / NCTC 11814 / E194a).